A 222-amino-acid chain; its full sequence is MTTLPRRIGMLGGTFDPVHIGHLRGALEVAELLELDELRLTPSARPPHRDMPSVTAQDRLAMVRSAVAGVSPLTVDDRELKRDKPSYTLDTLESMRAELAPRDQLFLLLGWDAFCGLPTWHRWEELLEHCHIVVLQRPDADSESPDAMRNLLAARAVSDPKALKGPGGQITFVWQTPLSVSATQIRQLLASGKSVRFLVPDAVLAYIDVHGLYRAPNTDGSP.

The protein belongs to the NadD family.

It catalyses the reaction nicotinate beta-D-ribonucleotide + ATP + H(+) = deamido-NAD(+) + diphosphate. It functions in the pathway cofactor biosynthesis; NAD(+) biosynthesis; deamido-NAD(+) from nicotinate D-ribonucleotide: step 1/1. In terms of biological role, catalyzes the reversible adenylation of nicotinate mononucleotide (NaMN) to nicotinic acid adenine dinucleotide (NaAD). The polypeptide is Probable nicotinate-nucleotide adenylyltransferase (Pseudomonas syringae pv. tomato (strain ATCC BAA-871 / DC3000)).